The primary structure comprises 42 residues: Photosystem I reaction center subunit IX (42 aa).

The helical transmembrane segment at 7–27 (YLSTAPVLAAVWFTVLAGILI) threads the bilayer.

It belongs to the PsaJ family.

Its subcellular location is the plastid. It localises to the chloroplast thylakoid membrane. In terms of biological role, may help in the organization of the PsaE and PsaF subunits. The chain is Photosystem I reaction center subunit IX from Ostreococcus tauri.